The sequence spans 142 residues: General odorant-binding protein 99a (142 aa).

An N-terminal signal peptide occupies residues Met1–Ala16. Disulfide bonds link Cys33–Cys64, Cys60–Cys116, and Cys105–Cys125.

Belongs to the PBP/GOBP family. As to expression, expressed in larval chemosensory organ. Specifically expressed exclusively in a subset of chemosensory sensilla on the third antennal segment.

The protein resides in the secreted. In terms of biological role, present in the aqueous fluid surrounding olfactory sensory dendrites and are thought to aid in the capture and transport of hydrophobic odorants into and through this fluid. The protein is General odorant-binding protein 99a (Obp99a) of Drosophila melanogaster (Fruit fly).